A 155-amino-acid chain; its full sequence is U4/U6.U5 small nuclear ribonucleoprotein 27 kDa protein (155 aa).

Composition is skewed to basic residues over residues 1 to 31 (MGRSRSRSPRRERRRSRSTSRERERRRRERS) and 39 to 59 (RRSRSRSPHRRRSRSPRRHRS). The disordered stretch occupies residues 1-97 (MGRSRSRSPR…ITEEDLEGKT (97 aa)). Ser61 and Ser65 each carry phosphoserine. The segment covering 66 to 97 (RLKERRDEEKKETKETKSKERQITEEDLEGKT) has biased composition (basic and acidic residues). 3 positions are modified to phosphoserine: Ser111, Ser114, and Ser132.

It belongs to the SNUT3 family. In terms of assembly, part of a tri-snRNP complex. In terms of processing, phosphorylated in vitro by snRNP-associated protein kinase.

It is found in the nucleus. May play a role in mRNA splicing. The protein is U4/U6.U5 small nuclear ribonucleoprotein 27 kDa protein (SNRNP27) of Homo sapiens (Human).